A 471-amino-acid polypeptide reads, in one-letter code: Casein kinase 1-like protein 9 (471 aa).

A Protein kinase domain is found at 9–278 (FKLGRKIGSG…LKRLFRDLFI (270 aa)). ATP is bound by residues 15 to 23 (IGSGSFGEL) and lysine 38. Residue aspartate 128 is the Proton acceptor of the active site. A disordered region spans residues 300 to 471 (SSSGSSSRTR…RSLELLTLRK (172 aa)). A compositionally biased stretch (basic and acidic residues) spans 325-339 (EKQERIAGKETRENR). The span at 385-430 (SSRYGSSSRRAIPSSSRPSSAGGPSDSRSSSRLVTSTGGVGTVSNR) shows a compositional bias: low complexity. Residues 431–449 (ASTSQRIQAGNESRTSSFS) show a composition bias toward polar residues. Over residues 454 to 464 (NTREDPLRRSL) the composition is skewed to basic and acidic residues.

It belongs to the protein kinase superfamily. CK1 Ser/Thr protein kinase family. Casein kinase I subfamily. As to quaternary structure, monomer. Autophosphorylated on serine, threonine and tyrosine residues. Expressed in leaves, stems and flowers.

The protein localises to the cytoplasm. It is found in the nucleus. The enzyme catalyses L-seryl-[protein] + ATP = O-phospho-L-seryl-[protein] + ADP + H(+). It carries out the reaction L-threonyl-[protein] + ATP = O-phospho-L-threonyl-[protein] + ADP + H(+). Casein kinases are operationally defined by their preferential utilization of acidic proteins such as caseins as substrates. Can phosphorylate casein on serine and threonine residues, and poly(Glu,Tyr) in vitro. This chain is Casein kinase 1-like protein 9, found in Arabidopsis thaliana (Mouse-ear cress).